We begin with the raw amino-acid sequence, 408 residues long: Glutamate N-acetyltransferase (408 aa).

The substrate site is built by Thr-150, Lys-176, Thr-189, Glu-271, Asn-403, and Thr-408. The Nucleophile role is filled by Thr-189.

This sequence belongs to the ArgJ family. In terms of assembly, heterotetramer of two alpha and two beta chains.

It localises to the cytoplasm. It carries out the reaction N(2)-acetyl-L-ornithine + L-glutamate = N-acetyl-L-glutamate + L-ornithine. The protein operates within amino-acid biosynthesis; L-arginine biosynthesis; L-ornithine and N-acetyl-L-glutamate from L-glutamate and N(2)-acetyl-L-ornithine (cyclic): step 1/1. Its function is as follows. Catalyzes the transfer of the acetyl group from N(2)-acetylornithine to glutamate, forming N-acetylglutamate and L-ornithine. The polypeptide is Glutamate N-acetyltransferase (Methanococcus maripaludis (strain DSM 14266 / JCM 13030 / NBRC 101832 / S2 / LL)).